Reading from the N-terminus, the 113-residue chain is uncharacterized protein (113 aa).

A helical membrane pass occupies residues Val-4–Arg-26. The tract at residues Arg-32–Arg-74 is disordered.

The protein resides in the membrane. This is an uncharacterized protein from Saccharomyces cerevisiae (strain ATCC 204508 / S288c) (Baker's yeast).